Reading from the N-terminus, the 183-residue chain is Glutathione-regulated potassium-efflux system ancillary protein KefG (183 aa).

It belongs to the NAD(P)H dehydrogenase (quinone) family. KefG subfamily. As to quaternary structure, interacts with KefB.

Its subcellular location is the cell inner membrane. The enzyme catalyses a quinone + NADH + H(+) = a quinol + NAD(+). It catalyses the reaction a quinone + NADPH + H(+) = a quinol + NADP(+). Regulatory subunit of a potassium efflux system that confers protection against electrophiles. Required for full activity of KefB. In Salmonella paratyphi C (strain RKS4594), this protein is Glutathione-regulated potassium-efflux system ancillary protein KefG.